Consider the following 247-residue polypeptide: 2,3-bisphosphoglycerate-dependent phosphoglycerate mutase (247 aa).

Substrate contacts are provided by residues 8 to 15 (RHGESQWN), 21 to 22 (TG), Arg-60, 87 to 90 (ERHY), Lys-98, 114 to 115 (RR), and 183 to 184 (GN). The active-site Tele-phosphohistidine intermediate is the His-9. Glu-87 functions as the Proton donor/acceptor in the catalytic mechanism.

Belongs to the phosphoglycerate mutase family. BPG-dependent PGAM subfamily.

It catalyses the reaction (2R)-2-phosphoglycerate = (2R)-3-phosphoglycerate. Its pathway is carbohydrate degradation; glycolysis; pyruvate from D-glyceraldehyde 3-phosphate: step 3/5. Functionally, catalyzes the interconversion of 2-phosphoglycerate and 3-phosphoglycerate. In Chlorobium phaeovibrioides (strain DSM 265 / 1930) (Prosthecochloris vibrioformis (strain DSM 265)), this protein is 2,3-bisphosphoglycerate-dependent phosphoglycerate mutase.